Here is a 154-residue protein sequence, read N- to C-terminus: Ribonuclease 8 (154 aa).

Positions Met1 to Ala27 are cleaved as a signal peptide. His42 acts as the Proton acceptor in catalysis. Cystine bridges form between Cys50/Cys93, Cys64/Cys118, Cys82/Cys133, and Cys89/Cys96. Substrate contacts are provided by residues Lys65 to Thr69 and Lys90. Catalysis depends on His149, which acts as the Proton donor.

This sequence belongs to the pancreatic ribonuclease family. Expressed prominently in the placenta and is not detected in any other tissues examined.

It is found in the secreted. Functionally, has a low ribonuclease activity. The chain is Ribonuclease 8 (RNASE8) from Homo sapiens (Human).